The sequence spans 526 residues: Probable feruloyl esterase B-2 (526 aa).

The signal sequence occupies residues 1–19 (MPSLRRLLPFLAAGSAALA). 2 disulfides stabilise this stretch: Cys28–Cys75 and Cys63–Cys114. N-linked (GlcNAc...) asparagine glycosylation is found at Asn53, Asn85, Asn98, and Asn138. Disulfide bonds link Cys187–Cys441, Cys256–Cys273, and Cys282–Cys291. Catalysis depends on Ser188, which acts as the Acyl-ester intermediate. Asn246 is a glycosylation site (N-linked (GlcNAc...) asparagine). 5 residues coordinate Ca(2+): Asp257, Asp260, Ala262, Asp264, and Ile266. N-linked (GlcNAc...) asparagine glycosylation is found at Asn287 and Asn311. Active-site charge relay system residues include Asp400 and His440. Residues Asn490 and Asn516 are each glycosylated (N-linked (GlcNAc...) asparagine). An intrachain disulfide couples Cys503 to Cys525.

The protein belongs to the tannase family.

It localises to the secreted. It catalyses the reaction feruloyl-polysaccharide + H2O = ferulate + polysaccharide.. In terms of biological role, involved in degradation of plant cell walls. Hydrolyzes the feruloyl-arabinose ester bond in arabinoxylans as well as the feruloyl-galactose and feruloyl-arabinose ester bonds in pectin. In Aspergillus oryzae (strain ATCC 42149 / RIB 40) (Yellow koji mold), this protein is Probable feruloyl esterase B-2 (faeB-2).